A 373-amino-acid polypeptide reads, in one-letter code: 3 beta-hydroxysteroid dehydrogenase/Delta 5--&gt;4-isomerase type 4 (373 aa).

Tyr-155 serves as the catalytic Proton acceptor. Lys-159 contributes to the NAD(+) binding site. The chain crosses the membrane as a helical span at residues 288 to 308 (LPLLYWLAFLLEIVSFFLHPV). At Lys-350 the chain carries N6-acetyllysine.

It belongs to the 3-beta-HSD family. In terms of tissue distribution, skin, placenta, also detectable in ovary and adrenal gland.

Its subcellular location is the endoplasmic reticulum membrane. It localises to the mitochondrion membrane. The catalysed reaction is a 3beta-hydroxy-Delta(5)-steroid + NAD(+) = a 3-oxo-Delta(5)-steroid + NADH + H(+). It catalyses the reaction a 3-oxo-Delta(5)-steroid = a 3-oxo-Delta(4)-steroid. Its pathway is lipid metabolism; steroid biosynthesis. In terms of biological role, 3-beta-HSD is a bifunctional enzyme, that catalyzes the oxidative conversion of Delta(5)-ene-3-beta-hydroxy steroid, and the oxidative conversion of ketosteroids. The 3-beta-HSD enzymatic system plays a crucial role in the biosynthesis of all classes of hormonal steroids. The protein is 3 beta-hydroxysteroid dehydrogenase/Delta 5--&gt;4-isomerase type 4 (Hsd3b6) of Rattus norvegicus (Rat).